The chain runs to 535 residues: PAC-1 interacting and coiled-coil domain-containing protein 1 (535 aa).

The interval 1–67 (MIITTPRRAN…KQTPPRSPVI (67 aa)) is disordered. Over residues 36-57 (SSTTPSSIGSSSSSSSSYASST) the composition is skewed to low complexity. Coiled-coil stretches lie at residues 109-172 (KLQY…RDLS) and 198-242 (SLMK…RQSL). 2 disordered regions span residues 254–277 (NESE…NDEE) and 503–535 (TCRP…HTHN). Positions 503–525 (TCRPTTTLISSTQPAQRSVSVEK) are enriched in polar residues. The segment covering 526–535 (NNNNNVHTHN) has biased composition (low complexity).

It belongs to the CCDC85 family. In terms of assembly, interacts with pac-1 and jac-1.

It is found in the cell junction. It localises to the adherens junction. Functionally, linker protein which helps to recruit the Rho GTPase-activating protein, pac-1, to adherens junctions. This Caenorhabditis elegans protein is PAC-1 interacting and coiled-coil domain-containing protein 1.